A 397-amino-acid chain; its full sequence is Transaldolase (397 aa).

Lysine 136 serves as the catalytic Schiff-base intermediate with substrate.

It belongs to the transaldolase family. Type 1 subfamily. As to quaternary structure, homodimer.

It is found in the cytoplasm. It carries out the reaction D-sedoheptulose 7-phosphate + D-glyceraldehyde 3-phosphate = D-erythrose 4-phosphate + beta-D-fructose 6-phosphate. Its pathway is carbohydrate degradation; pentose phosphate pathway; D-glyceraldehyde 3-phosphate and beta-D-fructose 6-phosphate from D-ribose 5-phosphate and D-xylulose 5-phosphate (non-oxidative stage): step 2/3. In terms of biological role, transaldolase is important for the balance of metabolites in the pentose-phosphate pathway. This Synechococcus sp. (strain ATCC 27144 / PCC 6301 / SAUG 1402/1) (Anacystis nidulans) protein is Transaldolase.